Reading from the N-terminus, the 414-residue chain is Peptide chain release factor subunit 1 (414 aa).

Belongs to the eukaryotic release factor 1 family. In terms of assembly, heterodimer of two subunits, one of which binds GTP.

The protein localises to the cytoplasm. Directs the termination of nascent peptide synthesis (translation) in response to the termination codons UAA, UAG and UGA. The chain is Peptide chain release factor subunit 1 (prf1) from Pyrococcus abyssi (strain GE5 / Orsay).